Consider the following 473-residue polypeptide: Glutamate--tRNA ligase 1 (473 aa).

The 'HIGH' region motif lies at 10–20 (PSPTGFLHIGG). A 'KMSKS' region motif is present at residues 252 to 256 (KLSKR). Lys255 contributes to the ATP binding site.

This sequence belongs to the class-I aminoacyl-tRNA synthetase family. Glutamate--tRNA ligase type 1 subfamily. In terms of assembly, monomer.

The protein localises to the cytoplasm. It carries out the reaction tRNA(Glu) + L-glutamate + ATP = L-glutamyl-tRNA(Glu) + AMP + diphosphate. Functionally, catalyzes the attachment of glutamate to tRNA(Glu) in a two-step reaction: glutamate is first activated by ATP to form Glu-AMP and then transferred to the acceptor end of tRNA(Glu). The sequence is that of Glutamate--tRNA ligase 1 from Wolbachia pipientis wMel.